A 1788-amino-acid chain; its full sequence is Laminin subunit beta-1 (1788 aa).

The first 24 residues, 1–24, serve as a signal peptide directing secretion; that stretch reads MLELRLIVVIVLALLSWQWDPVDS. Residues 23–43 are disordered; the sequence is DSQRPPQHGRRDRPKYPPNKF. The 238-residue stretch at 50-287 folds into the Laminin N-terminal domain; the sequence is ERSSCYPATG…GISNMVVRGS (238 aa). N-linked (GlcNAc...) asparagine glycosylation is found at Asn138, Asn201, and Asn232. Intrachain disulfides connect Cys288–Cys297, Cys290–Cys318, Cys320–Cys329, Cys332–Cys352, Cys355–Cys364, Cys357–Cys382, Cys385–Cys394, Cys397–Cys415, Cys418–Cys431, Cys420–Cys446, Cys448–Cys457, Cys460–Cys475, Cys478–Cys491, Cys480–Cys498, Cys500–Cys509, Cys512–Cys526, Cys529–Cys541, Cys531–Cys548, and Cys550–Cys559. Laminin EGF-like domains lie at 288-354, 355-417, 418-477, and 478-528; these read CSCY…ACKK, CECN…VCQP, CDCD…GCEP, and CTCN…GCSL. Asn487 is a glycosylation site (N-linked (GlcNAc...) asparagine). In terms of domain architecture, Laminin EGF-like 5; truncated spans 529-559; that stretch reads CNCDAGGSYDNYCDVISGQCRCRPHMTGRSC. Positions 567-783 constitute a Laminin IV type B domain; that stretch reads FIPLLPEVHE…LDNILSVFVH (217 aa). A glycan (N-linked (GlcNAc...) asparagine) is linked at Asn591. Residues 641 to 643 carry the Cell attachment site motif; that stretch reads RGD. 32 cysteine pairs are disulfide-bonded: Cys789–Cys801, Cys791–Cys808, Cys810–Cys819, Cys822–Cys834, Cys837–Cys849, Cys839–Cys856, Cys858–Cys867, Cys870–Cys880, Cys883–Cys892, Cys885–Cys899, Cys902–Cys911, Cys914–Cys930, Cys933–Cys949, Cys935–Cys960, Cys962–Cys971, Cys974–Cys988, Cys991–Cys1005, Cys993–Cys1012, Cys1015–Cys1024, Cys1027–Cys1040, Cys1043–Cys1057, Cys1045–Cys1064, Cys1066–Cys1075, Cys1078–Cys1091, Cys1094–Cys1106, Cys1096–Cys1113, Cys1115–Cys1124, Cys1127–Cys1139, Cys1142–Cys1154, Cys1144–Cys1161, Cys1163–Cys1172, and Cys1175–Cys1186. 8 Laminin EGF-like domains span residues 789–836, 837–882, 883–932, 933–990, 991–1042, 1043–1093, 1094–1141, and 1142–1188; these read CNCN…GCKA, CDCN…ECRV, CQCN…GCRP, CRCP…TCSK, CECS…NCQQ, CECD…GCES, CNCD…KCQP, and CECD…HCSP. N-linked (GlcNAc...) asparagine glycosylation occurs at Asn1051. Residues 1189 to 1405 form a domain II region; it reads CGECFNNWDL…SQIPELNNQV (217 aa). N-linked (GlcNAc...) asparagine glycosylation is found at Asn1246, Asn1301, Asn1330, and Asn1341. A coiled-coil region spans residues 1255–1405; that stretch reads EKLDYETQSL…SQIPELNNQV (151 aa). The domain alpha stretch occupies residues 1406-1432; that stretch reads CGKPGDPCDSLCGGAGCGHCGGFLSCE. A domain I region spans residues 1433 to 1788; that stretch reads HGAKTHSEEA…RGSHYRQCYT (356 aa). Residues 1453–1505 are a coiled coil; that stretch reads ITSKKDQADQTIRALTQAKLNASEAYEKAKRGFEQSERYLNQTNANIKLAENL. Asn1473, Asn1493, and Asn1515 each carry an N-linked (GlcNAc...) asparagine glycan. The stretch at 1540–1561 forms a coiled coil; sequence EEIETLGDQINRAVSSLKNVEA. Asn1581, Asn1644, and Asn1703 each carry an N-linked (GlcNAc...) asparagine glycan. The stretch at 1608–1762 forms a coiled coil; the sequence is QGKAKDAIQQ…QQLLRLQAEI (155 aa). Residues 1690–1719 form a disordered region; that stretch reads GEANNLQSATSATNQTLTDRASRSENARER. A compositionally biased stretch (polar residues) spans 1693–1708; it reads NNLQSATSATNQTLTD. The span at 1709–1719 shows a compositional bias: basic and acidic residues; it reads RASRSENARER.

In terms of assembly, laminin is a complex glycoprotein, consisting of three different polypeptide chains (alpha, beta, gamma), which are bound to each other by disulfide bonds into a cross-shaped molecule comprising one long and three short arms with globules at each end. In terms of tissue distribution, found in the basement membranes (major component).

It localises to the secreted. The protein resides in the extracellular space. Its subcellular location is the extracellular matrix. It is found in the basement membrane. Its function is as follows. Binding to cells via a high affinity receptor, laminin is thought to mediate the attachment, migration and organization of cells into tissues during embryonic development by interacting with other extracellular matrix components. Required for Ndg localization to the basement membrane. This Drosophila melanogaster (Fruit fly) protein is Laminin subunit beta-1 (LanB1).